The chain runs to 258 residues: Ribosomal RNA small subunit methyltransferase J (258 aa).

Residues 104–105 (RD), 120–121 (ER), and D175 contribute to the S-adenosyl-L-methionine site.

This sequence belongs to the methyltransferase superfamily. RsmJ family.

Its subcellular location is the cytoplasm. It carries out the reaction guanosine(1516) in 16S rRNA + S-adenosyl-L-methionine = N(2)-methylguanosine(1516) in 16S rRNA + S-adenosyl-L-homocysteine + H(+). In terms of biological role, specifically methylates the guanosine in position 1516 of 16S rRNA. The protein is Ribosomal RNA small subunit methyltransferase J of Chromobacterium violaceum (strain ATCC 12472 / DSM 30191 / JCM 1249 / CCUG 213 / NBRC 12614 / NCIMB 9131 / NCTC 9757 / MK).